A 290-amino-acid chain; its full sequence is S-adenosylmethionine-dependent nucleotide dehydratase (290 aa).

In terms of domain architecture, Radical SAM core spans 6-226; the sequence is SGNNIIPSVN…VNRHSKNKFL (221 aa). [4Fe-4S] cluster-binding residues include Cys22, Cys26, and Cys29.

Belongs to the radical SAM superfamily. Viperin family. The cofactor is [4Fe-4S] cluster.

The catalysed reaction is UTP + AH2 + S-adenosyl-L-methionine = 3'-deoxy-3',4'-didehydro-UTP + 5'-deoxyadenosine + L-methionine + A + H2O + H(+). Functionally, expression of pVip47 in E.coli (strain MG1655) confers resistance to phage P1; has no effect against T7. Catalyzes the conversion of uridine triphosphate (UTP) to 3'-deoxy-3',4'-didehydro-UTP (ddhUTP), probably via a SAM-dependent radical mechanism. The modified nucleotide represses transcription from T7 RNA polymerase-directed genes (possibly by acting as chain terminators), strongly suggesting these nucleotides block viral polymerase transcription. How this protein allows bacteria to resist viruses that do not encode their own RNA polymerase (such as lambda, P1) is unknown. This is S-adenosylmethionine-dependent nucleotide dehydratase from Flammeovirga pacifica.